Reading from the N-terminus, the 117-residue chain is Probable glycerol dehydratase-reactivating factor small subunit (117 aa).

Position 31 (Glu-31) interacts with Mg(2+).

It belongs to the DdrB/PduH family. As to quaternary structure, member of the GDR complex, probably composed of DhaF(2)/DhaG(2). Mg(2+) serves as cofactor.

Its function is as follows. Small subunit of the glycerol dehydratase-reactivating factor (GDR), which reactivates suicidally inhibited adenosylcobalamin-dependent glycerol dehydratase. This is Probable glycerol dehydratase-reactivating factor small subunit from Citrobacter freundii.